A 916-amino-acid polypeptide reads, in one-letter code: Cadherin-4 (916 aa).

Positions 1-20 are cleaved as a signal peptide; the sequence is MTAGAGVLLLLLSLSGALRA. Positions 21–169 are excised as a propeptide; that stretch reads HNEDLTTRET…NANGLRRRKR (149 aa). Residues 124 to 168 are disordered; sequence TSSPHSGHKPQKGKKVVALDPSPPPKDTLLPWPQHQNANGLRRRK. A compositionally biased stretch (basic residues) spans 129 to 138; it reads SGHKPQKGKK. Cadherin domains follow at residues 170-277, 278-392, 393-507, 508-613, and 614-724; these read DWVI…RPEF, INQV…PPEF, TAST…APYF, PSNH…DNAP, and ELLP…TIGA. Residues 170 to 734 are Extracellular-facing; it reads DWVIPPINVP…VAAAGLGTGA (565 aa). N-linked (GlcNAc...) asparagine glycans are attached at residues N283, N412, N557, N632, N661, and N702. A helical membrane pass occupies residues 735–756; sequence IVAILICILILLTMVLLFVMWM. At 757–916 the chain is on the cytoplasmic side; that stretch reads KRREKERHTK…ADMYGGGEED (160 aa). A disordered region spans residues 806–838; that stretch reads MGHVPSKAPGVRRVDERPVGAEPQYPIRPMVPH.

In terms of tissue distribution, expressed mainly in brain but also found in other tissues.

The protein localises to the cell membrane. In terms of biological role, cadherins are calcium-dependent cell adhesion proteins. They preferentially interact with themselves in a homophilic manner in connecting cells; cadherins may thus contribute to the sorting of heterogeneous cell types. May play an important role in retinal development. This is Cadherin-4 (CDH4) from Homo sapiens (Human).